We begin with the raw amino-acid sequence, 80 residues long: Acyl carrier protein (80 aa).

The Carrier domain occupies 1 to 76 (MTLEEKIIEI…DVIDYLKVRN (76 aa)). Position 36 is an O-(pantetheine 4'-phosphoryl)serine (serine 36).

This sequence belongs to the acyl carrier protein (ACP) family. Post-translationally, 4'-phosphopantetheine is transferred from CoA to a specific serine of apo-ACP by AcpS. This modification is essential for activity because fatty acids are bound in thioester linkage to the sulfhydryl of the prosthetic group.

Its subcellular location is the cytoplasm. The protein operates within lipid metabolism; fatty acid biosynthesis. In terms of biological role, carrier of the growing fatty acid chain in fatty acid biosynthesis. This is Acyl carrier protein from Syntrophus aciditrophicus (strain SB).